The chain runs to 324 residues: Beta-ketoacyl-[acyl-carrier-protein] synthase III (324 aa).

Catalysis depends on residues Cys-113 and His-251. Positions 252–256 are ACP-binding; sequence QANKR. Asn-281 is a catalytic residue.

This sequence belongs to the thiolase-like superfamily. FabH family. As to quaternary structure, homodimer.

The protein localises to the cytoplasm. The catalysed reaction is malonyl-[ACP] + acetyl-CoA + H(+) = 3-oxobutanoyl-[ACP] + CO2 + CoA. The protein operates within lipid metabolism; fatty acid biosynthesis. Its function is as follows. Catalyzes the condensation reaction of fatty acid synthesis by the addition to an acyl acceptor of two carbons from malonyl-ACP. Catalyzes the first condensation reaction which initiates fatty acid synthesis and may therefore play a role in governing the total rate of fatty acid production. Possesses both acetoacetyl-ACP synthase and acetyl transacylase activities. Its substrate specificity determines the biosynthesis of branched-chain and/or straight-chain of fatty acids. The protein is Beta-ketoacyl-[acyl-carrier-protein] synthase III of Bartonella henselae (strain ATCC 49882 / DSM 28221 / CCUG 30454 / Houston 1) (Rochalimaea henselae).